Consider the following 136-residue polypeptide: Ribonuclease P protein component (136 aa).

Residues 39–59 form a disordered region; it reads LPDVSSSKPARDTGAEQTSAP.

This sequence belongs to the RnpA family. In terms of assembly, consists of a catalytic RNA component (M1 or rnpB) and a protein subunit.

It carries out the reaction Endonucleolytic cleavage of RNA, removing 5'-extranucleotides from tRNA precursor.. Its function is as follows. RNaseP catalyzes the removal of the 5'-leader sequence from pre-tRNA to produce the mature 5'-terminus. It can also cleave other RNA substrates such as 4.5S RNA. The protein component plays an auxiliary but essential role in vivo by binding to the 5'-leader sequence and broadening the substrate specificity of the ribozyme. The chain is Ribonuclease P protein component from Salinispora tropica (strain ATCC BAA-916 / DSM 44818 / JCM 13857 / NBRC 105044 / CNB-440).